A 552-amino-acid chain; its full sequence is uncharacterized protein (552 aa).

An ATP-binding site is contributed by 29-36 (GENAWGKS). One can recognise a Toprim domain in the interval 379–469 (RCWLLVEGET…AEREHLTALP (91 aa)).

This is an uncharacterized protein from Escherichia coli (strain K12).